The primary structure comprises 167 residues: uncharacterized protein (167 aa).

Residues 70–118 adopt a coiled-coil conformation; sequence KIVELRKAMESIITELAYIKGELKGLQEKGESKVERKEIIEEKIQKAMV. Basic and acidic residues predominate over residues 128 to 155; sequence EKEERKPAKESKRREHDVIIPEGKKEER. The disordered stretch occupies residues 128–167; sequence EKEERKPAKESKRREHDVIIPEGKKEERTDDGEDGLIVCD.

This is an uncharacterized protein from Archaeoglobus fulgidus (strain ATCC 49558 / DSM 4304 / JCM 9628 / NBRC 100126 / VC-16).